Reading from the N-terminus, the 352-residue chain is Rhodopsin, deep-sea form (352 aa).

Over M1 to A36 the chain is Extracellular. Residues N2 and N15 are each glycosylated (N-linked (GlcNAc...) asparagine). A helical transmembrane segment spans residues Y37 to V61. Over T62–N73 the chain is Cytoplasmic. Residues Y74 to S98 traverse the membrane as a helical segment. Topologically, residues M99 to E113 are extracellular. A disulfide bridge links C110 with C187. A helical transmembrane segment spans residues G114 to I133. At E134–H152 the chain is on the cytoplasmic side. Residues A153–S176 form a helical membrane-spanning segment. Residues R177–S202 are Extracellular-facing. The N-linked (GlcNAc...) asparagine glycan is linked to N200. The helical transmembrane segment at F203 to V230 threads the bilayer. At K231–R252 the chain is on the cytoplasmic side. A helical transmembrane segment spans residues M253–F276. The Extracellular segment spans residues T277 to G284. Residues P285–L309 traverse the membrane as a helical segment. Position 296 is an N6-(retinylidene)lysine (K296). Residues N310–A352 are Cytoplasmic-facing. Residue C323 is the site of S-palmitoyl cysteine attachment. The tract at residues G333–A352 is disordered. Low complexity predominate over residues A334 to A352.

Belongs to the G-protein coupled receptor 1 family. Opsin subfamily. In terms of processing, phosphorylated on some or all of the serine and threonine residues present in the C-terminal region. Rod shaped photoreceptor cells which mediates vision in dim light.

It is found in the membrane. Visual pigments such as rhodopsin and porphyropsin are light-absorbing molecules that mediate vision. Rhodopsin consists of an apoprotein, opsin, covalently linked to 11-cis-retinal. This receptor is coupled to the activation of phospholipase C. Porphyropsin consists of opsin covalently linked to 11-cis 3,4-didehydroretinal. The chain is Rhodopsin, deep-sea form from Anguilla anguilla (European freshwater eel).